The chain runs to 219 residues: HTH-type transcriptional activator FasR (219 aa).

The interval 1–30 is disordered; sequence MSDLANTAERRGEKRPAGGNRRGNRLPRDE. Residues 29–89 enclose the HTH tetR-type domain; it reads DERRGQLLIA…AVLQRHVDNL (61 aa). Residues 52 to 71 constitute a DNA-binding region (H-T-H motif); the sequence is GMDEIADRAGVSKPVLYQHF.

In terms of assembly, homodimer.

With respect to regulation, fasR:DNA binding is regulated by long-chain acyl-CoAs (C14- to C26-CoA), which act as effector molecules that modulate the affinity of FasR for its DNA binding sequences and therefore modulate the expression of the essential fas-acpS operon. Transcriptional activator that plays a central role in sensing mycobacterial long-chain fatty acids and regulating lipid biosynthesis. Activates the expression of the genes encoding the fatty acid synthase (fas) and the 4-phosphopantetheinyl transferase (acpS), whose products are involved in the fatty acid and mycolic acid biosynthesis. Specifically binds to three conserved operator sequences present in the fas-acpS promoter region. Essential for M.smegmatis viability. This chain is HTH-type transcriptional activator FasR, found in Mycolicibacterium smegmatis (strain ATCC 700084 / mc(2)155) (Mycobacterium smegmatis).